The primary structure comprises 916 residues: Protein translocase subunit SecA (916 aa).

ATP-binding positions include Q87, 105–109, and D512; that span reads GEGKT. The tract at residues 857–916 is disordered; that stretch reads QHAEAPSMEQAVAGEEEELPEGPAPVVPLEPVRNEQKIGRNEPCPCGSGKKYKHCHGQLD. Zn(2+)-binding residues include C900, C902, C911, and H912. The segment covering 906–916 has biased composition (basic residues); the sequence is KKYKHCHGQLD.

The protein belongs to the SecA family. As to quaternary structure, monomer and homodimer. Part of the essential Sec protein translocation apparatus which comprises SecA, SecYEG and auxiliary proteins SecDF-YajC and YidC. Zn(2+) serves as cofactor.

It localises to the cell inner membrane. It is found in the cytoplasm. It catalyses the reaction ATP + H2O + cellular proteinSide 1 = ADP + phosphate + cellular proteinSide 2.. Its function is as follows. Part of the Sec protein translocase complex. Interacts with the SecYEG preprotein conducting channel. Has a central role in coupling the hydrolysis of ATP to the transfer of proteins into and across the cell membrane, serving both as a receptor for the preprotein-SecB complex and as an ATP-driven molecular motor driving the stepwise translocation of polypeptide chains across the membrane. The sequence is that of Protein translocase subunit SecA from Pseudomonas aeruginosa (strain UCBPP-PA14).